We begin with the raw amino-acid sequence, 206 residues long: Large ribosomal subunit protein uL4 (206 aa).

Residues 48–78 (THSVKTRGHVSGGGAKPWRQKGTGRARAGSN) are disordered.

The protein belongs to the universal ribosomal protein uL4 family. In terms of assembly, part of the 50S ribosomal subunit.

Its function is as follows. One of the primary rRNA binding proteins, this protein initially binds near the 5'-end of the 23S rRNA. It is important during the early stages of 50S assembly. It makes multiple contacts with different domains of the 23S rRNA in the assembled 50S subunit and ribosome. Functionally, forms part of the polypeptide exit tunnel. The polypeptide is Large ribosomal subunit protein uL4 (Lawsonia intracellularis (strain PHE/MN1-00)).